A 355-amino-acid polypeptide reads, in one-letter code: Peptide chain release factor 1 (355 aa).

At Q230 the chain carries N5-methylglutamine.

This sequence belongs to the prokaryotic/mitochondrial release factor family. Methylated by PrmC. Methylation increases the termination efficiency of RF1.

The protein resides in the cytoplasm. Peptide chain release factor 1 directs the termination of translation in response to the peptide chain termination codons UAG and UAA. The chain is Peptide chain release factor 1 from Geobacter metallireducens (strain ATCC 53774 / DSM 7210 / GS-15).